The primary structure comprises 308 residues: Uricase (308 aa).

Residues lysine 5 and threonine 65 each act as charge relay system in the active site. Residues threonine 65, aspartate 66, phenylalanine 177, arginine 194, isoleucine 242, glutamine 243, and asparagine 269 each coordinate urate. The segment at 283–308 is disordered; that stretch reads ASVLREPPAPTGFQQFSMDRGDLDEQ.

It belongs to the uricase family.

The catalysed reaction is urate + O2 + H2O = 5-hydroxyisourate + H2O2. The protein operates within purine metabolism; urate degradation; (S)-allantoin from urate: step 1/3. Its function is as follows. Catalyzes the oxidation of uric acid to 5-hydroxyisourate, which is further processed to form (S)-allantoin. This Haloferax volcanii (strain ATCC 29605 / DSM 3757 / JCM 8879 / NBRC 14742 / NCIMB 2012 / VKM B-1768 / DS2) (Halobacterium volcanii) protein is Uricase.